We begin with the raw amino-acid sequence, 159 residues long: Large ribosomal subunit protein uL22 (159 aa).

A disordered region spans residues 129 to 159 (VEGQQKAKMARQKAVTSVVKAPSKTQGGVQK).

It belongs to the universal ribosomal protein uL22 family. Part of the 50S ribosomal subunit.

In terms of biological role, this protein binds specifically to 23S rRNA; its binding is stimulated by other ribosomal proteins, e.g. L4, L17, and L20. It is important during the early stages of 50S assembly. It makes multiple contacts with different domains of the 23S rRNA in the assembled 50S subunit and ribosome. Functionally, the globular domain of the protein is located near the polypeptide exit tunnel on the outside of the subunit, while an extended beta-hairpin is found that lines the wall of the exit tunnel in the center of the 70S ribosome. The chain is Large ribosomal subunit protein uL22 (rplV) from Mycoplasma pneumoniae (strain ATCC 29342 / M129 / Subtype 1) (Mycoplasmoides pneumoniae).